Reading from the N-terminus, the 164-residue chain is Class I hydrophobin rodA (164 aa).

The first 18 residues, 1–18 (MQFSISALVLGLAATVYA), serve as a signal peptide directing secretion. Residue N50 is glycosylated (N-linked (GlcNAc...) asparagine). 4 disulfide bridges follow: C60-C138, C68-C132, C69-C109, and C139-C157.

This sequence belongs to the fungal hydrophobin family. In terms of assembly, self-assembles to form functional amyloid fibrils called rodlets. Self-assembly into fibrillar rodlets occurs spontaneously at hydrophobic:hydrophilic interfaces and the rodlets further associate laterally to form amphipathic monolayers.

The protein localises to the secreted. The protein resides in the cell wall. In terms of biological role, aerial growth, conidiation, and dispersal of filamentous fungi in the environment rely upon a capability of their secreting small amphipathic proteins called hydrophobins (HPBs) with low sequence identity. Class I can self-assemble into an outermost layer of rodlet bundles on aerial cell surfaces, conferring cellular hydrophobicity that supports fungal growth, development and dispersal; whereas Class II form highly ordered films at water-air interfaces through intermolecular interactions but contribute nothing to the rodlet structure. RodA is a class I hydrophobin involved in the cell surface hydrophobicity. The surface rodlet layer of the conidial cell wall makes airborne conidia of filamentous fungi inert to both innate and adaptive immunity. The sequence is that of Class I hydrophobin rodA from Penicillium camemberti (strain FM 013).